The sequence spans 547 residues: Leiomodin-2 (547 aa).

The segment at 1–47 (MSTFGYRRGLSKYESIDEDELLASLSAEELKELERELEDIEPDRNLP) is interaction with tropomyosin alpha. Interaction with actin regions lie at residues 1–161 (MSTF…SDNS), 162–497 (KPKI…KEIK), and 521–540 (AHENLMEAIRGSSIKQLKRV). Phosphoserine is present on residues Ser11, Ser15, and Ser24. A coiled-coil region spans residues 16–41 (IDEDELLASLSAEELKELERELEDIE). 2 disordered regions span residues 91–162 (KVAE…DNSK) and 352–533 (MDKQ…RGSS). 2 stretches are compositionally biased toward acidic residues: residues 95–104 (DKEESEEELI) and 112–139 (VSEEVYTEEEEEESQEEEEEEDSDEEER). The stretch at 113–148 (SEEVYTEEEEEESQEEEEEEDSDEEERTIETAKGIN) forms a coiled coil. The span at 149–160 (GTVNYDSVNSDN) shows a compositional bias: polar residues. Residues 352-367 (MDKQRQKRLQEQKQQE) are compositionally biased toward basic and acidic residues. Phosphoserine is present on Ser400. Residues 419 to 449 (ATPPPPPPPPPPPPPSSQRLPPPPPPPPPPL) are compositionally biased toward pro residues. The segment covering 465–475 (QQESAQRALQN) has biased composition (polar residues). Positions 477–487 (QKKKKGKKVKK) are enriched in basic residues. Basic and acidic residues predominate over residues 494–512 (KEIKNSLRSVQEKKMEDSS). In terms of domain architecture, WH2 spans 521–540 (AHENLMEAIRGSSIKQLKRV).

It belongs to the tropomodulin family. As to quaternary structure, can bind at least three actin monomers and thereby provides a nucleus for actin filament formation. Interacts (via N-terminus) with tropomyosin alpha (TPM1) (via N-terminus). May also interact with TPM2 (via N-terminus). Interacts with FLII. In terms of tissue distribution, specifically expressed in heart and skeletal muscles, with higher levels in heart (at protein level). Not expressed in other tissues.

It is found in the cytoplasm. The protein resides in the myofibril. The protein localises to the sarcomere. Its subcellular location is the m line. It localises to the cytoskeleton. In terms of biological role, mediates nucleation of actin filaments and thereby promotes actin polymerization. Plays a role in the regulation of actin filament length. Required for normal sarcomere organization in the heart, and for normal heart function. The sequence is that of Leiomodin-2 (LMOD2) from Homo sapiens (Human).